The chain runs to 390 residues: D-alanyl-D-alanine carboxypeptidase DacD (390 aa).

The N-terminal stretch at 1 to 23 is a signal peptide; the sequence is MLLKRRLFIAASLFAMHLSPALA. Residue S65 is the Acyl-ester intermediate of the active site. Residue K68 is the Proton acceptor of the active site. Residue S131 is part of the active site. Residue K234 participates in substrate binding.

It belongs to the peptidase S11 family.

Its subcellular location is the cell inner membrane. It catalyses the reaction Preferential cleavage: (Ac)2-L-Lys-D-Ala-|-D-Ala. Also transpeptidation of peptidyl-alanyl moieties that are N-acyl substituents of D-alanine.. It functions in the pathway cell wall biogenesis; peptidoglycan biosynthesis. Its function is as follows. Removes C-terminal D-alanyl residues from sugar-peptide cell wall precursors. The sequence is that of D-alanyl-D-alanine carboxypeptidase DacD (dacD) from Salmonella typhimurium (strain LT2 / SGSC1412 / ATCC 700720).